The sequence spans 406 residues: Copper transport protein CTR1 (406 aa).

Residues 1 to 152 lie on the Cytoplasmic side of the membrane; that stretch reads MEGMNMGSSM…HHLHANNSGK (152 aa). A run of 3 repeats spans residues 9–27, 28–46, and 47–65. The interval 9-65 is 3 X 19 AA tandem repeats of S-M-X-M-X-A-M-S-S-A-S-K-T-X-X-S-X-M-X; that stretch reads SMNMDAMSSASKTVASSMASMSMDAMSSASKTILSSMSSMSMEAMSSASKTLASTMS. Positions 71 to 117 are disordered; the sequence is SMGSSSMSGMSMSMSSTPTSSASAQTTSDSSMSGMSGMSSSDNSSSS. Residues 153–173 traverse the membrane as a helical segment; the sequence is AFGIFLLFVVAAFVYKLLLFV. Topologically, residues 174-250 are extracellular; that stretch reads SWCLEVHWFK…RAFLVFTSTM (77 aa). Residues 251-271 form a helical membrane-spanning segment; it reads IIYMLMLATMSFVLTYVFAVI. Over 272–406 the chain is Cytoplasmic; the sequence is TGLALSEVFF…LLPAEKFTHN (135 aa). An REP-III motif is present at residues 304-315; that stretch reads CPGFGNCQCGRH. Positions 318 to 406 are disordered; sequence PSPDPIAVAD…LLPAEKFTHN (89 aa). Serine 344 bears the Phosphoserine mark. Lysine 345 is covalently cross-linked (Glycyl lysine isopeptide (Lys-Gly) (interchain with G-Cter in ubiquitin)). Serine 349 is subject to Phosphoserine. 2 stretches are compositionally biased toward polar residues: residues 349-375 and 384-395; these read SENNQKKTPTQEEGCNCATDSGKNQAN and SKLQEQSGNMDQ. Threonine 356 is subject to Phosphothreonine. Serine 369 bears the Phosphoserine mark.

As to quaternary structure, homooligomer. Post-translationally, extensively O-glycosylated.

It is found in the cell membrane. It carries out the reaction Cu(2+)(in) = Cu(2+)(out). Functionally, high-affinity copper transporter of plasma membrane that mediates copper uptake under low copper conditions. Copper transport through the high affinity system requiring CTRl supplies the iron transport multicopper ferroxidase FET3 with copper, which in turn is required for ferrous iron uptake. The energy for translocation is unlikely to be directly derived from ATP hydrolysis and the exact mechanism driving the transmembrane transport of copper has still to be determined. Binds 4 copper ions via its C-terminal cystein-rich domain and is able to deliver Cu(I) directly to both the chaperone ATX1 and to an N-terminal domain of the CCC2 protein. Also able to mediate the uptake of the anticancer drug cisplatin. This Saccharomyces cerevisiae (strain ATCC 204508 / S288c) (Baker's yeast) protein is Copper transport protein CTR1.